Consider the following 285-residue polypeptide: HTH-type transcriptional regulator YofA (285 aa).

The 58-residue stretch at 1-58 (MESGDLKIFQAVAREGSITKAAQMLNYVQSNVTARVHNLEEDLNIRLFHRTNRGMKLT) folds into the HTH lysR-type domain. The H-T-H motif DNA-binding region spans 18-37 (ITKAAQMLNYVQSNVTARVH).

Belongs to the LysR transcriptional regulatory family.

The protein resides in the cytoplasm. Functionally, regulates expression of the cell division protein ftsW, and is essential for cell viability during stationary phase. The protein is HTH-type transcriptional regulator YofA (yofA) of Bacillus subtilis (strain 168).